The following is a 40-amino-acid chain: Natriuretic peptide PtNP-a (40 aa).

A disulfide bridge links Cys-9 with Cys-25. Residues 17 to 34 (ISNTSGMGCRNPIQNRPK) show a composition bias toward polar residues. Residues 17 to 40 (ISNTSGMGCRNPIQNRPKSTPGGS) form a disordered region.

Belongs to the natriuretic peptide family. As to expression, expressed by the venom gland.

The protein resides in the secreted. Snake venom natriuretic peptide that targets NPR1 and possibly NPR2. Exhibits hypotensive and vasodepressor activities. Recombinant PtNP-a demonstrates a dose-dependent stimulation of cGMP production via the natriuretic peptide receptor 1 (NPR1) (EC(50)=563 nM) in Madine Darby Canine Kidney (MDCK) cells. It also inhibits the angiotensin converting enzyme (ACE). In Pseudonaja textilis (Eastern brown snake), this protein is Natriuretic peptide PtNP-a.